A 477-amino-acid polypeptide reads, in one-letter code: Glycogen synthase (477 aa).

Residue Lys-15 coordinates ADP-alpha-D-glucose.

Belongs to the glycosyltransferase 1 family. Bacterial/plant glycogen synthase subfamily.

It catalyses the reaction [(1-&gt;4)-alpha-D-glucosyl](n) + ADP-alpha-D-glucose = [(1-&gt;4)-alpha-D-glucosyl](n+1) + ADP + H(+). It functions in the pathway glycan biosynthesis; glycogen biosynthesis. Synthesizes alpha-1,4-glucan chains using ADP-glucose. This chain is Glycogen synthase, found in Salmonella arizonae (strain ATCC BAA-731 / CDC346-86 / RSK2980).